The sequence spans 303 residues: 2-dehydropantoate 2-reductase (303 aa).

Residues 7–12 (GCGALG), Asn-98, and Ala-122 each bind NADP(+). Residue Asn-98 coordinates substrate. The active-site Proton donor is the Lys-176. Substrate contacts are provided by Asn-180, Asn-184, Asn-194, and Ser-244. Position 256 (Glu-256) interacts with NADP(+).

The protein belongs to the ketopantoate reductase family. In terms of assembly, monomer.

Its subcellular location is the cytoplasm. It catalyses the reaction (R)-pantoate + NADP(+) = 2-dehydropantoate + NADPH + H(+). The protein operates within cofactor biosynthesis; (R)-pantothenate biosynthesis; (R)-pantoate from 3-methyl-2-oxobutanoate: step 2/2. Catalyzes the NADPH-dependent reduction of ketopantoate into pantoic acid. The sequence is that of 2-dehydropantoate 2-reductase (panE) from Escherichia coli O157:H7.